The chain runs to 522 residues: N-acetylgalactosamine-6-sulfatase (522 aa).

The signal sequence occupies residues 1–26; sequence MAAVVAATRWWQLLLVLSAAGMGASG. The segment at 27-379 is catalytic domain; that stretch reads APQPPNILLL…PTLLQGRLMD (353 aa). Residues Asp39, Asp40, and Cys79 each coordinate Ca(2+). Cys79 serves as the catalytic Nucleophile. Cys79 carries the post-translational modification 3-oxoalanine (Cys). His142 is a catalytic residue. Residue Asn204 is glycosylated (N-linked (GlcNAc...) asparagine). Ca(2+) contacts are provided by Asp288 and Asn289. Cys308 and Cys419 form a disulfide bridge. Asn423 is a glycosylation site (N-linked (GlcNAc...) asparagine). Intrachain disulfides connect Cys489–Cys518 and Cys501–Cys507.

It belongs to the sulfatase family. Homodimer. Ca(2+) serves as cofactor. The conversion to 3-oxoalanine (also known as C-formylglycine, FGly), of a serine or cysteine residue in prokaryotes and of a cysteine residue in eukaryotes, is critical for catalytic activity.

The protein resides in the lysosome. It catalyses the reaction Hydrolysis of the 6-sulfate groups of the N-acetyl-D-galactosamine 6-sulfate units of chondroitin sulfate and of the D-galactose 6-sulfate units of keratan sulfate.. This Homo sapiens (Human) protein is N-acetylgalactosamine-6-sulfatase (GALNS).